The primary structure comprises 234 residues: Ubiquitin thioesterase OTUB2 (234 aa).

Residues 40-231 (TSIRKTKGDG…TSHYNILYAA (192 aa)) form the OTU domain. The active site involves Asp-48. Cys-51 serves as the catalytic Nucleophile. Catalysis depends on residues His-205 and His-224.

Belongs to the peptidase C65 family.

The enzyme catalyses Thiol-dependent hydrolysis of ester, thioester, amide, peptide and isopeptide bonds formed by the C-terminal Gly of ubiquitin (a 76-residue protein attached to proteins as an intracellular targeting signal).. In terms of biological role, hydrolase that can remove conjugated ubiquitin from proteins in vitro and may therefore play an important regulatory role at the level of protein turnover by preventing degradation. Mediates deubiquitination of 'Lys-11'-,'Lys-48'- and 'Lys-63'-linked polyubiquitin chains, with a preference for 'Lys-63'-linked polyubiquitin chains. This chain is Ubiquitin thioesterase OTUB2 (Otub2), found in Mus musculus (Mouse).